The primary structure comprises 156 residues: MPRKGPVPRREILPDPLYNSRLVARFINRLMYDGKKGAAEKIFYSALDTLAQKTGEEPLKAFEKAIENVKPHLEVKARRVGGATYQVPMEVRPDRQVSLSLRWLIAYSRSRGEKGMVSKLSAELLDAFNNRGGAVKKKEDTHRMAEANKAFAHYRW.

Belongs to the universal ribosomal protein uS7 family. In terms of assembly, part of the 30S ribosomal subunit. Contacts proteins S9 and S11.

In terms of biological role, one of the primary rRNA binding proteins, it binds directly to 16S rRNA where it nucleates assembly of the head domain of the 30S subunit. Is located at the subunit interface close to the decoding center, probably blocks exit of the E-site tRNA. The polypeptide is Small ribosomal subunit protein uS7 (Nitratidesulfovibrio vulgaris (strain ATCC 29579 / DSM 644 / CCUG 34227 / NCIMB 8303 / VKM B-1760 / Hildenborough) (Desulfovibrio vulgaris)).